A 632-amino-acid chain; its full sequence is 1-deoxy-D-xylulose-5-phosphate synthase (632 aa).

Thiamine diphosphate is bound by residues histidine 87 and 128-130; that span reads GHS. Aspartate 159 contributes to the Mg(2+) binding site. Thiamine diphosphate is bound by residues 160 to 161, asparagine 188, phenylalanine 295, and glutamate 377; that span reads GA. Mg(2+) is bound at residue asparagine 188.

The protein belongs to the transketolase family. DXPS subfamily. As to quaternary structure, homodimer. The cofactor is Mg(2+). It depends on thiamine diphosphate as a cofactor.

It catalyses the reaction D-glyceraldehyde 3-phosphate + pyruvate + H(+) = 1-deoxy-D-xylulose 5-phosphate + CO2. It participates in metabolic intermediate biosynthesis; 1-deoxy-D-xylulose 5-phosphate biosynthesis; 1-deoxy-D-xylulose 5-phosphate from D-glyceraldehyde 3-phosphate and pyruvate: step 1/1. Functionally, catalyzes the acyloin condensation reaction between C atoms 2 and 3 of pyruvate and glyceraldehyde 3-phosphate to yield 1-deoxy-D-xylulose-5-phosphate (DXP). The polypeptide is 1-deoxy-D-xylulose-5-phosphate synthase (Stutzerimonas stutzeri (strain A1501) (Pseudomonas stutzeri)).